Reading from the N-terminus, the 115-residue chain is NADH-ubiquinone oxidoreductase chain 3 (115 aa).

The next 3 membrane-spanning stretches (helical) occupy residues 4-24, 55-75, and 87-107; these read LTAL…AFWL, FFLV…LLPL, and MMLT…YEWM.

The protein belongs to the complex I subunit 3 family. As to quaternary structure, core subunit of respiratory chain NADH dehydrogenase (Complex I) which is composed of 45 different subunits. Interacts with TMEM186. Interacts with TMEM242.

Its subcellular location is the mitochondrion inner membrane. It catalyses the reaction a ubiquinone + NADH + 5 H(+)(in) = a ubiquinol + NAD(+) + 4 H(+)(out). In terms of biological role, core subunit of the mitochondrial membrane respiratory chain NADH dehydrogenase (Complex I) which catalyzes electron transfer from NADH through the respiratory chain, using ubiquinone as an electron acceptor. Essential for the catalytic activity of complex I. This chain is NADH-ubiquinone oxidoreductase chain 3, found in Peromyscus boylii (Brush deermouse).